Consider the following 34-residue polypeptide: Photosystem II reaction center protein M (34 aa).

Residues 5 to 25 (ILAFIATALFILVPTAFLLII) traverse the membrane as a helical segment.

It belongs to the PsbM family. In terms of assembly, PSII is composed of 1 copy each of membrane proteins PsbA, PsbB, PsbC, PsbD, PsbE, PsbF, PsbH, PsbI, PsbJ, PsbK, PsbL, PsbM, PsbT, PsbX, PsbY, PsbZ, Psb30/Ycf12, at least 3 peripheral proteins of the oxygen-evolving complex and a large number of cofactors. It forms dimeric complexes.

The protein resides in the plastid. It is found in the chloroplast thylakoid membrane. Functionally, one of the components of the core complex of photosystem II (PSII). PSII is a light-driven water:plastoquinone oxidoreductase that uses light energy to abstract electrons from H(2)O, generating O(2) and a proton gradient subsequently used for ATP formation. It consists of a core antenna complex that captures photons, and an electron transfer chain that converts photonic excitation into a charge separation. This subunit is found at the monomer-monomer interface. This is Photosystem II reaction center protein M from Buxus microphylla (Littleleaf boxwood).